Here is a 306-residue protein sequence, read N- to C-terminus: Tyrosine recombinase XerC (306 aa).

The 90-residue stretch at 1–90 folds into the Core-binding (CB) domain; sequence MYVHIDNFLV…AWRSFYRYLY (90 aa). Residues 111 to 298 form the Tyr recombinase domain; the sequence is RLPRFLYEDE…TGERLKKVYR (188 aa). Residues arginine 151, lysine 175, histidine 250, arginine 253, and histidine 276 contribute to the active site. Tyrosine 285 acts as the O-(3'-phospho-DNA)-tyrosine intermediate in catalysis.

Belongs to the 'phage' integrase family. XerC subfamily. As to quaternary structure, forms a cyclic heterotetrameric complex composed of two molecules of XerC and two molecules of XerD.

It is found in the cytoplasm. Functionally, site-specific tyrosine recombinase, which acts by catalyzing the cutting and rejoining of the recombining DNA molecules. The XerC-XerD complex is essential to convert dimers of the bacterial chromosome into monomers to permit their segregation at cell division. It also contributes to the segregational stability of plasmids. The sequence is that of Tyrosine recombinase XerC from Pelotomaculum thermopropionicum (strain DSM 13744 / JCM 10971 / SI).